Consider the following 346-residue polypeptide: Histidinol-phosphate aminotransferase (346 aa).

K209 is subject to N6-(pyridoxal phosphate)lysine.

Belongs to the class-II pyridoxal-phosphate-dependent aminotransferase family. Histidinol-phosphate aminotransferase subfamily. Homodimer. The cofactor is pyridoxal 5'-phosphate.

It carries out the reaction L-histidinol phosphate + 2-oxoglutarate = 3-(imidazol-4-yl)-2-oxopropyl phosphate + L-glutamate. It participates in amino-acid biosynthesis; L-histidine biosynthesis; L-histidine from 5-phospho-alpha-D-ribose 1-diphosphate: step 7/9. This is Histidinol-phosphate aminotransferase from Vibrio vulnificus (strain CMCP6).